The sequence spans 689 residues: Glycine--tRNA ligase beta subunit (689 aa).

The protein belongs to the class-II aminoacyl-tRNA synthetase family. Tetramer of two alpha and two beta subunits.

The protein localises to the cytoplasm. It catalyses the reaction tRNA(Gly) + glycine + ATP = glycyl-tRNA(Gly) + AMP + diphosphate. This is Glycine--tRNA ligase beta subunit (glyS) from Coxiella burnetii (strain RSA 493 / Nine Mile phase I).